A 245-amino-acid chain; its full sequence is Orotidine 5'-phosphate decarboxylase (245 aa).

Residues Asp-22, Lys-44, 71–80, Thr-131, Arg-192, Gln-201, Gly-221, and Arg-222 each bind substrate; that span reads DLKFHDIPNT. Lys-73 (proton donor) is an active-site residue.

This sequence belongs to the OMP decarboxylase family. Type 1 subfamily. Homodimer.

It carries out the reaction orotidine 5'-phosphate + H(+) = UMP + CO2. The protein operates within pyrimidine metabolism; UMP biosynthesis via de novo pathway; UMP from orotate: step 2/2. Catalyzes the decarboxylation of orotidine 5'-monophosphate (OMP) to uridine 5'-monophosphate (UMP). This Shigella flexneri serotype 5b (strain 8401) protein is Orotidine 5'-phosphate decarboxylase.